The sequence spans 229 residues: Large ribosomal subunit protein uL1 (229 aa).

This sequence belongs to the universal ribosomal protein uL1 family. As to quaternary structure, part of the 50S ribosomal subunit.

Binds directly to 23S rRNA. The L1 stalk is quite mobile in the ribosome, and is involved in E site tRNA release. Functionally, protein L1 is also a translational repressor protein, it controls the translation of the L11 operon by binding to its mRNA. The polypeptide is Large ribosomal subunit protein uL1 (Listeria monocytogenes serovar 1/2a (strain ATCC BAA-679 / EGD-e)).